The sequence spans 451 residues: Metalloprotease MJ0996 (451 aa).

It belongs to the peptidase U62 family.

Functionally, probable metalloprotease. The protein is Metalloprotease MJ0996 of Methanocaldococcus jannaschii (strain ATCC 43067 / DSM 2661 / JAL-1 / JCM 10045 / NBRC 100440) (Methanococcus jannaschii).